A 590-amino-acid chain; its full sequence is UvrABC system protein C (590 aa).

One can recognise a GIY-YIG domain in the interval 14–91 (DQPGCYLMKD…IKKHDPKYNV (78 aa)). The region spanning 196 to 231 (NEVKKELEEKMHEAAENLEFERAKELRDQIAHIEST) is the UVR domain.

The protein belongs to the UvrC family. Interacts with UvrB in an incision complex.

It localises to the cytoplasm. The UvrABC repair system catalyzes the recognition and processing of DNA lesions. UvrC both incises the 5' and 3' sides of the lesion. The N-terminal half is responsible for the 3' incision and the C-terminal half is responsible for the 5' incision. This is UvrABC system protein C from Bacillus subtilis (strain 168).